Here is a 188-residue protein sequence, read N- to C-terminus: Elongation factor P-like protein (188 aa).

This sequence belongs to the elongation factor P family.

This chain is Elongation factor P-like protein, found in Marinobacter nauticus (strain ATCC 700491 / DSM 11845 / VT8) (Marinobacter aquaeolei).